The following is a 239-amino-acid chain: ATP synthase subunit a (239 aa).

Transmembrane regions (helical) follow at residues 13–33 (IWFDGTIVLMVLLTCIIVFAF), 75–95 (FHLMAFTLFMFVLVSNILGLV), 113–133 (DPIVTLTLAMMMIVLTHFFGM), 174–194 (GNIFAGEVLLGLIAGTVASVG), and 208–230 (WVAFSIFIGCIQAFIFVTLSMVY).

This sequence belongs to the ATPase A chain family. As to quaternary structure, F-type ATPases have 2 components, CF(1) - the catalytic core - and CF(0) - the membrane proton channel. CF(1) has five subunits: alpha(3), beta(3), gamma(1), delta(1), epsilon(1). CF(0) has three main subunits: a(1), b(2) and c(9-12). The alpha and beta chains form an alternating ring which encloses part of the gamma chain. CF(1) is attached to CF(0) by a central stalk formed by the gamma and epsilon chains, while a peripheral stalk is formed by the delta and b chains.

Its subcellular location is the cell membrane. Key component of the proton channel; it plays a direct role in the translocation of protons across the membrane. In Enterococcus faecalis (strain ATCC 700802 / V583), this protein is ATP synthase subunit a.